The chain runs to 824 residues: Putative beta-glucuronidase (824 aa).

A helical transmembrane segment spans residues 26–43 (YLKLVLVLYLIMVSWSGY). Glu-430 functions as the Proton donor in the catalytic mechanism.

This sequence belongs to the glycosyl hydrolase 2 family.

It localises to the membrane. The catalysed reaction is a beta-D-glucuronoside + H2O = D-glucuronate + an alcohol. Glycoside hydrolase that may be involved in ulvan degradation. Ulvan is the main polysaccharide component of the Ulvales (green seaweed) cell wall. It is composed of disaccharide building blocks comprising 3-sulfated rhamnose (Rha3S) linked to D-glucuronic acid (GlcA), L-iduronic acid (IduA), or D-xylose (Xyl). This Formosa agariphila (strain DSM 15362 / KCTC 12365 / LMG 23005 / KMM 3901 / M-2Alg 35-1) protein is Putative beta-glucuronidase.